The sequence spans 372 residues: Cuticle collagen dpy-10 (372 aa).

Positions 1–45 (MKNNAKEDYRTFSLTTNYSRQMIYRCVTGLQIGFSLFSFIIVCVA) are cleaved as a signal peptide. Triple-helical region regions lie at residues 144–173 (GPPG…PGTT), 195–251 (GPPG…KGPT), and 259–324 (GPPG…PGVC). The segment at 144-372 (GPPGPRGSSG…RAGYQGYGRK (229 aa)) is disordered. Residues 185–196 (EPPPCRPCPKGP) are compositionally biased toward pro residues. A compositionally biased stretch (low complexity) spans 197 to 208 (PGIKGWPGFPGD). 2 stretches are compositionally biased toward gly residues: residues 237-246 (GYRGGPGAPG) and 283-292 (GLTGGQGERG). Over residues 293–303 (WPGVSGESGEP) the composition is skewed to low complexity. The segment covering 353 to 363 (GYGGSRGGGDR) has biased composition (gly residues).

This sequence belongs to the cuticular collagen family. Collagen polypeptide chains are complexed within the cuticle by disulfide bonds and other types of covalent cross-links.

Functionally, nematode cuticles are composed largely of collagen-like proteins. The cuticle functions both as an exoskeleton and as a barrier to protect the worm from its environment. The chain is Cuticle collagen dpy-10 (dpy-10) from Caenorhabditis elegans.